Consider the following 220-residue polypeptide: UPF0758 protein Asuc_0013 (220 aa).

In terms of domain architecture, MPN spans 98–220 (EFTNPLTVRL…YFSFAEQDWL (123 aa)). Residues His-169, His-171, and Asp-182 each coordinate Zn(2+). The JAMM motif motif lies at 169–182 (HNHPSGSAEPSASD).

The protein belongs to the UPF0758 family.

The chain is UPF0758 protein Asuc_0013 from Actinobacillus succinogenes (strain ATCC 55618 / DSM 22257 / CCUG 43843 / 130Z).